A 284-amino-acid polypeptide reads, in one-letter code: 4-hydroxybenzoate octaprenyltransferase (284 aa).

Transmembrane regions (helical) follow at residues 19-39, 42-62, 93-113, 114-134, 136-156, 161-181, 209-229, 235-252, and 264-284; these read IGTLLLLWPTLWSLIIAAKGM, FDVLVVFILGVVLMRSAGCVI, IVLFLVLAVVSFLLVLTMNPL, TIKLSFIGVGLAFIYPFMKRF, HLPQLFLGLAFSWAIPMAWAA, LPSIVWFIFVINALWTIAYDT, LMVGALQLVTLAMLIALGMHY, FYWALLVSGSLFVYQQHL, and AFLNNNYVGMAVTVGLFITFW.

Belongs to the UbiA prenyltransferase family. The cofactor is Mg(2+).

It is found in the cell inner membrane. The catalysed reaction is all-trans-octaprenyl diphosphate + 4-hydroxybenzoate = 4-hydroxy-3-(all-trans-octaprenyl)benzoate + diphosphate. It functions in the pathway cofactor biosynthesis; ubiquinone biosynthesis. In terms of biological role, catalyzes the prenylation of para-hydroxybenzoate (PHB) with an all-trans polyprenyl group. Mediates the second step in the final reaction sequence of ubiquinone-8 (UQ-8) biosynthesis, which is the condensation of the polyisoprenoid side chain with PHB, generating the first membrane-bound Q intermediate 3-octaprenyl-4-hydroxybenzoate. The polypeptide is 4-hydroxybenzoate octaprenyltransferase (Vibrio atlanticus (strain LGP32) (Vibrio splendidus (strain Mel32))).